Consider the following 1065-residue polypeptide: Carbamoyl phosphate synthase large chain (1065 aa).

Positions 1-401 are carboxyphosphate synthetic domain; it reads MPLDKTIKKV…ALLKAVTSLE (401 aa). The ATP site is built by Arg-129, Arg-169, Gly-175, Gly-176, Gln-208, Val-210, Glu-215, Gly-241, Val-242, His-243, Gln-284, and Glu-298. Positions 133 to 327 constitute an ATP-grasp 1 domain; sequence KNLMEEIDEP…IAKIAAKIAV (195 aa). Mg(2+) contacts are provided by Gln-284, Glu-298, and Asn-300. Gln-284, Glu-298, and Asn-300 together coordinate Mn(2+). Residues 402-548 are oligomerization domain; it reads GKISGLRLEK…YSSYENEDEN (147 aa). The carbamoyl phosphate synthetic domain stretch occupies residues 549 to 931; the sequence is EVTDDKKIVV…AIYKGFRAAG (383 aa). The ATP-grasp 2 domain maps to 673 to 863; it reads SELLKELNIP…MVKLAVEILT (191 aa). 10 residues coordinate ATP: Arg-709, Lys-748, Ile-750, Glu-754, Gly-779, Val-780, His-781, Ser-782, Gln-822, and Glu-834. Residues Gln-822, Glu-834, and Asn-836 each coordinate Mg(2+). The Mn(2+) site is built by Gln-822, Glu-834, and Asn-836. Residues 932-1065 form the MGS-like domain; sequence IEVPKDGGNL…EYRAMKEYFK (134 aa). Residues 932 to 1065 are allosteric domain; the sequence is IEVPKDGGNL…EYRAMKEYFK (134 aa).

This sequence belongs to the CarB family. As to quaternary structure, composed of two chains; the small (or glutamine) chain promotes the hydrolysis of glutamine to ammonia, which is used by the large (or ammonia) chain to synthesize carbamoyl phosphate. Tetramer of heterodimers (alpha,beta)4. It depends on Mg(2+) as a cofactor. The cofactor is Mn(2+).

It carries out the reaction hydrogencarbonate + L-glutamine + 2 ATP + H2O = carbamoyl phosphate + L-glutamate + 2 ADP + phosphate + 2 H(+). The enzyme catalyses hydrogencarbonate + NH4(+) + 2 ATP = carbamoyl phosphate + 2 ADP + phosphate + 2 H(+). It participates in amino-acid biosynthesis; L-arginine biosynthesis; carbamoyl phosphate from bicarbonate: step 1/1. It functions in the pathway pyrimidine metabolism; UMP biosynthesis via de novo pathway; (S)-dihydroorotate from bicarbonate: step 1/3. Large subunit of the glutamine-dependent carbamoyl phosphate synthetase (CPSase). CPSase catalyzes the formation of carbamoyl phosphate from the ammonia moiety of glutamine, carbonate, and phosphate donated by ATP, constituting the first step of 2 biosynthetic pathways, one leading to arginine and/or urea and the other to pyrimidine nucleotides. The large subunit (synthetase) binds the substrates ammonia (free or transferred from glutamine from the small subunit), hydrogencarbonate and ATP and carries out an ATP-coupled ligase reaction, activating hydrogencarbonate by forming carboxy phosphate which reacts with ammonia to form carbamoyl phosphate. This chain is Carbamoyl phosphate synthase large chain, found in Clostridium acetobutylicum (strain ATCC 824 / DSM 792 / JCM 1419 / IAM 19013 / LMG 5710 / NBRC 13948 / NRRL B-527 / VKM B-1787 / 2291 / W).